A 541-amino-acid chain; its full sequence is Chaperonin GroEL 1 (541 aa).

ATP is bound by residues 29–32, 86–90, glycine 413, and aspartate 492; these read TLGP and DGTTT.

It belongs to the chaperonin (HSP60) family. In terms of assembly, forms a cylinder of 14 subunits composed of two heptameric rings stacked back-to-back. Interacts with the co-chaperonin GroES.

The protein localises to the cytoplasm. The catalysed reaction is ATP + H2O + a folded polypeptide = ADP + phosphate + an unfolded polypeptide.. Together with its co-chaperonin GroES, plays an essential role in assisting protein folding. The GroEL-GroES system forms a nano-cage that allows encapsulation of the non-native substrate proteins and provides a physical environment optimized to promote and accelerate protein folding. In Rhodococcus jostii (strain RHA1), this protein is Chaperonin GroEL 1.